The primary structure comprises 418 residues: 1-acylglycerol-3-phosphate O-acyltransferase (418 aa).

The AB hydrolase-1 domain occupies 121-251 (PTLVMVHGYG…RATWKGAVLN (131 aa)). A GXSXG motif is present at residues 197 to 201 (GHSFG). The HXXXXD motif motif lies at 379–384 (HFVFID).

The protein belongs to the peptidase S33 family. ABHD4/ABHD5 subfamily.

Its subcellular location is the cytoplasm. The enzyme catalyses a 1-acyl-sn-glycero-3-phosphate + an acyl-CoA = a 1,2-diacyl-sn-glycero-3-phosphate + CoA. In terms of biological role, lysophosphatidic acid acyltransferase which functions in phosphatidic acid biosynthesis. Is highly specific for lysophosphatidic acid and able to use different acyl-CoA donors. May regulate neutral lipid accumulation and participate in the regulation of lipid turnover in vegetative cells. Possesses additional triacylglycerol lipase and phospholipase A2 activities in vitro. Is not active as esterase or lysophospholipase. This Arabidopsis thaliana (Mouse-ear cress) protein is 1-acylglycerol-3-phosphate O-acyltransferase.